A 134-amino-acid polypeptide reads, in one-letter code: Protein NrdI (134 aa).

This sequence belongs to the NrdI family.

Probably involved in ribonucleotide reductase function. This Serratia proteamaculans (strain 568) protein is Protein NrdI.